Reading from the N-terminus, the 610-residue chain is Diol dehydratase-reactivating factor large subunit (610 aa).

11–13 (NSS) contributes to the ATP binding site. Residues Thr105, Asp166, and Asp183 each coordinate Mg(2+). Residues 459-462 (EEIK), 557-558 (GS), and Arg591 contribute to the ATP site.

The protein belongs to the DdrA/PduG family. Component of the DDR complex, a heterotetramer of DdrA(2)/DdrB(2). The DDR complex interacts with the diol dehydratase complex in the presence of ADP but not ATP. Requires Mg(2+) as cofactor.

It carries out the reaction ATP + H2O = ADP + phosphate + H(+). Large subunit of the diol dehydratase-reactivating factor (DDR), which reactivates suicidally inhibited adenosylcobalamin-dependent diol dehydratase (DD, pddA, pddB, pddC). DDR acts as a chaperone, reactivating inactivated DD holoenzyme in the presence of ATP, Mg(2+) and free adenosylcobalamin (AdoCbl), by mediating the exchange of the tightly bound damaged cofactor AdoCbl for a free intact one. Reactivation takes place in two steps: ADP-dependent cobalamin release, then ATP-dependent dissociation of the DD apoenzyme-DDR complex. DDR has weak ATPase activity which is required for DD reactivation. This subunit contains the adenosine nucleotide binding site. Activates glycerol-inactivated, O2-inactivated holoenzyme and inactivated enzyme-cyanocobalamin complex. Also reactivates glycerol-inactivated hologlycerol dehydratase, a DD isozyme. This chain is Diol dehydratase-reactivating factor large subunit, found in Klebsiella michiganensis (strain ATCC 8724 / DSM 4798 / JCM 20051 / NBRC 3318 / NRRL B-199 / KCTC 1686 / BUCSAV 143 / CCM 1901).